The primary structure comprises 291 residues: uncharacterized protein (291 aa).

Residues Met-1 to Ser-55 form a disordered region. The next 2 helical transmembrane spans lie at Trp-74–Ala-96 and Tyr-188–Leu-210.

The protein to T.pallidum TP_0733.

It localises to the cell membrane. This is an uncharacterized protein from Treponema pallidum (strain Nichols).